Here is a 190-residue protein sequence, read N- to C-terminus: dTTP/UTP pyrophosphatase (190 aa).

The active-site Proton acceptor is the Asp70.

The protein belongs to the Maf family. YhdE subfamily. A divalent metal cation serves as cofactor.

The protein resides in the cytoplasm. It catalyses the reaction dTTP + H2O = dTMP + diphosphate + H(+). The catalysed reaction is UTP + H2O = UMP + diphosphate + H(+). Its function is as follows. Nucleoside triphosphate pyrophosphatase that hydrolyzes dTTP and UTP. May have a dual role in cell division arrest and in preventing the incorporation of modified nucleotides into cellular nucleic acids. In Paramagnetospirillum magneticum (strain ATCC 700264 / AMB-1) (Magnetospirillum magneticum), this protein is dTTP/UTP pyrophosphatase.